Here is a 275-residue protein sequence, read N- to C-terminus: Urease accessory protein UreD (275 aa).

This sequence belongs to the UreD family. As to quaternary structure, ureD, UreF and UreG form a complex that acts as a GTP-hydrolysis-dependent molecular chaperone, activating the urease apoprotein by helping to assemble the nickel containing metallocenter of UreC. The UreE protein probably delivers the nickel.

It is found in the cytoplasm. Its function is as follows. Required for maturation of urease via the functional incorporation of the urease nickel metallocenter. The protein is Urease accessory protein UreD of Cereibacter sphaeroides (strain ATCC 17025 / ATH 2.4.3) (Rhodobacter sphaeroides).